A 387-amino-acid polypeptide reads, in one-letter code: 8-amino-7-oxononanoate synthase (387 aa).

Substrate is bound at residue arginine 19. Residue 106–107 (GY) coordinates pyridoxal 5'-phosphate. Histidine 131 is a binding site for substrate. Pyridoxal 5'-phosphate contacts are provided by serine 177, histidine 205, and threonine 234. Lysine 237 is modified (N6-(pyridoxal phosphate)lysine). Threonine 351 contacts substrate.

The protein belongs to the class-II pyridoxal-phosphate-dependent aminotransferase family. BioF subfamily. In terms of assembly, homodimer. Requires pyridoxal 5'-phosphate as cofactor.

The enzyme catalyses 6-carboxyhexanoyl-[ACP] + L-alanine + H(+) = (8S)-8-amino-7-oxononanoate + holo-[ACP] + CO2. The protein operates within cofactor biosynthesis; biotin biosynthesis. Functionally, catalyzes the decarboxylative condensation of pimeloyl-[acyl-carrier protein] and L-alanine to produce 8-amino-7-oxononanoate (AON), [acyl-carrier protein], and carbon dioxide. The chain is 8-amino-7-oxononanoate synthase from Methylococcus capsulatus (strain ATCC 33009 / NCIMB 11132 / Bath).